Reading from the N-terminus, the 263-residue chain is Oxidoreductase tpcG (263 aa).

This sequence belongs to the avfA family. In terms of tissue distribution, specifically expressed in conidia.

The protein operates within secondary metabolite biosynthesis. In terms of biological role, oxidoreductase; part of the gene cluster that mediates the biosynthesis of trypacidin, a mycotoxin with antiprotozoal activity and that plays a role in the infection process. The pathway begins with the synthesis of atrochrysone thioester by the polyketide synthase (PKS) tpcC. The atrochrysone carboxyl ACP thioesterase tpcB then breaks the thioester bond and releases the atrochrysone carboxylic acid from tpcC. The decarboxylase tpcK converts atrochrysone carboxylic acid to atrochrysone which is further reduced into emodin anthrone. The next step is performed by the emodin anthrone oxygenase tpcL that catalyzes the oxidation of emodinanthrone to emodin. Emodin O-methyltransferase encoded by tpcA catalyzes methylation of the 8-hydroxy group of emodin to form questin. Ring cleavage of questin by questin oxidase tpcI leads to desmethylsulochrin via several intermediates including questin epoxide. Another methylation step catalyzed by tpcM leads to the formation of sulochrin which is further converted to monomethylsulfochrin by tpcH. Finally, the tpcJ catalyzes the conversion of monomethylsulfochrin to trypacidin. Trypacidin is toxic for human pulmonary and bronchial epithelial cells by initiating the intracellular formation of nitric oxide (NO) and hydrogen peroxide (H(2)O(2)), thus triggering host necrotic cell death. The trypacidin pathway is also able to produce endocrocin via a distinct route from the endocrocin Enc pathway. This chain is Oxidoreductase tpcG, found in Aspergillus fumigatus (strain ATCC MYA-4609 / CBS 101355 / FGSC A1100 / Af293) (Neosartorya fumigata).